A 129-amino-acid polypeptide reads, in one-letter code: DNA base-flipping protein (129 aa).

It belongs to the MGMT family. ATL subfamily. Interacts with HelD and UvrA.

Functionally, involved in DNA damage recognition. Binds DNA containing O(6)-methylguanine and larger O(6)-alkylguanine adducts, and to double-stranded DNA that contains an AP (apurinic/apyrimidinic) site. Binds to the damaged base and flips the base out of the DNA duplex into an extrahelical conformation, which allows processing by repair proteins. Works in partnership with the nucleotide excision repair (NER) pathway to enhance the repair of the O(6)-alkylguanine adducts larger than the methyl adduct. Also prevents methyl-directed mismatch repair (MMR)-mediated attack of the O(6)-alkylguanine:T mispairs for the larger alkyl groups. This is DNA base-flipping protein from Escherichia coli (strain K12).